Reading from the N-terminus, the 140-residue chain is Beta/delta-urticatoxin-De2a (140 aa).

An N-terminal signal peptide occupies residues 1 to 18 (MKTSTALVLLLALTATSA). A propeptide spanning residues 19–78 (SSGDHQFIDEQNIMNVAEGKNVISSLSSSGGGDDAAAIMESVLVNGGNRKMVFMMVSGSQ) is cleaved from the precursor. Cystine bridges form between Cys-81/Cys-95, Cys-88/Cys-100, Cys-94/Cys-108, Cys-113/Cys-127, Cys-120/Cys-131, and Cys-126/Cys-139.

The protein belongs to the urticatoxin-2 family. As to expression, expressed in trichomes, that are stiff epidermal hairs located on the surface of petioles and leaves.

Its subcellular location is the secreted. Functionally, plant defense neurotoxin that causes pain and systemic symptoms in mammals via modulation of voltage-gated sodium channels (Nav). Potent modulator of human Nav1.5/SCN5A (EC(50)=55 nM), Nav1.6/SCN8A (EC(50)=0.86 nM), and Nav1.7/SCN9A (EC(50)=208 nM), where it shifts the activation threshold to more negative potentials and delays fast inactivation. Also shifts the voltage-dependence of steady-state fast inactivation of Nav1.6/SCN8A, but not that of Nav1.5/SCN5A or Nav1.7/SCN9A. On Nav1.7/SCN9A, principally acts by binding to extracellular loops of domain IV (Nav site 3). In vivo, intraplantar injection into mice causes numerous dose-dependent, immediate, and long-lasting spontaneous pain behaviors, while no swelling is observed in the injected paw. At the highest doses tested, systemic symptoms including hypokinesia and hypersalivation are observed. This is Beta/delta-urticatoxin-De2a from Dendrocnide excelsa (Giant stinging tree).